Consider the following 191-residue polypeptide: Protein UL140 (191 aa).

Residues 28-48 form a helical membrane-spanning segment; sequence TLVVFGFIVTLLFFLFMLYFW.

It localises to the host membrane. The sequence is that of Protein UL140 (UL140) from Homo sapiens (Human).